The primary structure comprises 153 residues: UPF0311 protein Rpal_1987 (153 aa).

This sequence belongs to the UPF0311 family.

This chain is UPF0311 protein Rpal_1987, found in Rhodopseudomonas palustris (strain TIE-1).